The sequence spans 1482 residues: Pregnancy zone protein (1482 aa).

An N-terminal signal peptide occupies residues 1 to 25; sequence MRKDRLLHLCLVLLLILLSASDSNS. Asn54, Asn69, Asn246, Asn392, and Asn406 each carry an N-linked (GlcNAc...) asparagine glycan. Residues 685–735 are bait region; the sequence is CSVIPSVSAGAVGQGYYGAGLGVVERPYVPQLGTYNVIPLNNEQSSGPVPE. N-linked (GlcNAc...) asparagine glycosylation is found at Asn753, Asn875, and Asn932. A cross-link (isoglutamyl cysteine thioester (Cys-Gln)) is located at residues 978–981; that stretch reads CGEQ. 2 N-linked (GlcNAc...) asparagine glycosylation sites follow: Asn997 and Asn1430.

It belongs to the protease inhibitor I39 (alpha-2-macroglobulin) family. In terms of assembly, homotetramer, which consists of two pairs of disulfide-linked chains. As to expression, plasma. Prominent constituent of late-pregnancy sera.

The protein localises to the secreted. Its function is as follows. Is able to inhibit all four classes of proteinases by a unique 'trapping' mechanism. This protein has a peptide stretch, called the 'bait region' which contains specific cleavage sites for different proteinases. When a proteinase cleaves the bait region, a conformational change is induced in the protein which traps the proteinase. The entrapped enzyme remains active against low molecular weight substrates (activity against high molecular weight substrates is greatly reduced). Following cleavage in the bait region a thioester bond is hydrolyzed and mediates the covalent binding of the protein to the proteinase. In Homo sapiens (Human), this protein is Pregnancy zone protein (PZP).